We begin with the raw amino-acid sequence, 226 residues long: Ribose-5-phosphate isomerase A (226 aa).

Substrate is bound by residues 26–29 (TGST), 82–85 (DGAD), and 95–98 (KGGG). E104 (proton acceptor) is an active-site residue. K122 is a substrate binding site.

Belongs to the ribose 5-phosphate isomerase family. As to quaternary structure, homodimer.

The enzyme catalyses aldehydo-D-ribose 5-phosphate = D-ribulose 5-phosphate. The protein operates within carbohydrate degradation; pentose phosphate pathway; D-ribose 5-phosphate from D-ribulose 5-phosphate (non-oxidative stage): step 1/1. Functionally, catalyzes the reversible conversion of ribose-5-phosphate to ribulose 5-phosphate. This is Ribose-5-phosphate isomerase A from Streptococcus uberis (strain ATCC BAA-854 / 0140J).